We begin with the raw amino-acid sequence, 297 residues long: 4-hydroxy-tetrahydrodipicolinate synthase (297 aa).

Thr49 contacts pyruvate. Tyr137 functions as the Proton donor/acceptor in the catalytic mechanism. Lys166 serves as the catalytic Schiff-base intermediate with substrate. Residue Ile208 participates in pyruvate binding.

This sequence belongs to the DapA family. In terms of assembly, homotetramer; dimer of dimers.

Its subcellular location is the cytoplasm. The catalysed reaction is L-aspartate 4-semialdehyde + pyruvate = (2S,4S)-4-hydroxy-2,3,4,5-tetrahydrodipicolinate + H2O + H(+). It participates in amino-acid biosynthesis; L-lysine biosynthesis via DAP pathway; (S)-tetrahydrodipicolinate from L-aspartate: step 3/4. Catalyzes the condensation of (S)-aspartate-beta-semialdehyde [(S)-ASA] and pyruvate to 4-hydroxy-tetrahydrodipicolinate (HTPA). This chain is 4-hydroxy-tetrahydrodipicolinate synthase, found in Parabacteroides distasonis (strain ATCC 8503 / DSM 20701 / CIP 104284 / JCM 5825 / NCTC 11152).